The sequence spans 399 residues: Elongation factor Tu (399 aa).

Positions 10 to 209 constitute a tr-type G domain; the sequence is KPHVNIGTIG…EVDAYIPTPE (200 aa). The segment at 19 to 26 is G1; the sequence is GHVDHGKT. GTP is bound at residue 19 to 26; it reads GHVDHGKT. T26 contacts Mg(2+). The G2 stretch occupies residues 60 to 64; the sequence is GITIA. The tract at residues 81-84 is G3; it reads DCPG. GTP is bound by residues 81-85 and 136-139; these read DCPGH and NKQD. Positions 136-139 are G4; that stretch reads NKQD. Residues 174–176 are G5; sequence SAL.

The protein belongs to the TRAFAC class translation factor GTPase superfamily. Classic translation factor GTPase family. EF-Tu/EF-1A subfamily. Monomer.

Its subcellular location is the cytoplasm. It carries out the reaction GTP + H2O = GDP + phosphate + H(+). Its function is as follows. GTP hydrolase that promotes the GTP-dependent binding of aminoacyl-tRNA to the A-site of ribosomes during protein biosynthesis. This is Elongation factor Tu from Helicobacter pylori (strain ATCC 700392 / 26695) (Campylobacter pylori).